The primary structure comprises 124 residues: Large ribosomal subunit protein bL12 (124 aa).

Belongs to the bacterial ribosomal protein bL12 family. As to quaternary structure, homodimer. Part of the ribosomal stalk of the 50S ribosomal subunit. Forms a multimeric L10(L12)X complex, where L10 forms an elongated spine to which 2 to 4 L12 dimers bind in a sequential fashion. Binds GTP-bound translation factors.

Functionally, forms part of the ribosomal stalk which helps the ribosome interact with GTP-bound translation factors. Is thus essential for accurate translation. The protein is Large ribosomal subunit protein bL12 of Akkermansia muciniphila (strain ATCC BAA-835 / DSM 22959 / JCM 33894 / BCRC 81048 / CCUG 64013 / CIP 107961 / Muc).